Here is a 117-residue protein sequence, read N- to C-terminus: Translation initiation factor 1A (117 aa).

Positions 17–92 constitute an S1-like domain; the sequence is IRVPLPDRSK…ERGDIVYRYT (76 aa).

It belongs to the eIF-1A family.

In terms of biological role, seems to be required for maximal rate of protein biosynthesis. Enhances ribosome dissociation into subunits and stabilizes the binding of the initiator Met-tRNA(I) to 40 S ribosomal subunits. This Thermococcus kodakarensis (strain ATCC BAA-918 / JCM 12380 / KOD1) (Pyrococcus kodakaraensis (strain KOD1)) protein is Translation initiation factor 1A.